A 389-amino-acid polypeptide reads, in one-letter code: Acetylornithine aminotransferase (389 aa).

Pyridoxal 5'-phosphate contacts are provided by residues 104 to 105 (GT) and Phe131. Arg134 is a N(2)-acetyl-L-ornithine binding site. Residue 216–219 (DEVQ) coordinates pyridoxal 5'-phosphate. At Lys245 the chain carries N6-(pyridoxal phosphate)lysine. A N(2)-acetyl-L-ornithine-binding site is contributed by Ser273. Thr274 contacts pyridoxal 5'-phosphate.

Belongs to the class-III pyridoxal-phosphate-dependent aminotransferase family. ArgD subfamily. Homodimer. Requires pyridoxal 5'-phosphate as cofactor.

The protein resides in the cytoplasm. The enzyme catalyses N(2)-acetyl-L-ornithine + 2-oxoglutarate = N-acetyl-L-glutamate 5-semialdehyde + L-glutamate. The protein operates within amino-acid biosynthesis; L-arginine biosynthesis; N(2)-acetyl-L-ornithine from L-glutamate: step 4/4. The chain is Acetylornithine aminotransferase from Methanopyrus kandleri (strain AV19 / DSM 6324 / JCM 9639 / NBRC 100938).